A 228-amino-acid polypeptide reads, in one-letter code: MNKISTKKAICILSGGMDSTLSSYIAKKDGFEIIAVHFNYGQRTQNRELKAFRDICNELDIKSKYEIDIPFFTQIGANALTDMSIDVPTGGLEAGVPITYVPFRNGIFLAITAAIAEKEGATAMYIGVVQEDSSGYPDCTEEFIQDMKKAINQGTKEDTKIEIITPLVHLSKAQIVQEAIKLNVPLELTWSCYKEEEEACGVCDSCRLRLNGFEQAGKKDPIKYKEFQ.

13-23 is a binding site for ATP; that stretch reads LSGGMDSTLSS. Zn(2+) contacts are provided by Cys192, Cys200, Cys203, and Cys206.

Belongs to the QueC family. Zn(2+) is required as a cofactor.

It catalyses the reaction 7-carboxy-7-deazaguanine + NH4(+) + ATP = 7-cyano-7-deazaguanine + ADP + phosphate + H2O + H(+). The protein operates within purine metabolism; 7-cyano-7-deazaguanine biosynthesis. Functionally, catalyzes the ATP-dependent conversion of 7-carboxy-7-deazaguanine (CDG) to 7-cyano-7-deazaguanine (preQ(0)). The protein is 7-cyano-7-deazaguanine synthase of Aliarcobacter butzleri (strain RM4018) (Arcobacter butzleri).